The chain runs to 256 residues: Ribosomal RNA small subunit methyltransferase J (256 aa).

S-adenosyl-L-methionine contacts are provided by residues 104 to 105 (RD), 120 to 121 (ER), 156 to 157 (SS), and aspartate 174.

Belongs to the methyltransferase superfamily. RsmJ family.

The protein resides in the cytoplasm. It catalyses the reaction guanosine(1516) in 16S rRNA + S-adenosyl-L-methionine = N(2)-methylguanosine(1516) in 16S rRNA + S-adenosyl-L-homocysteine + H(+). Functionally, specifically methylates the guanosine in position 1516 of 16S rRNA. The protein is Ribosomal RNA small subunit methyltransferase J of Yersinia pseudotuberculosis serotype O:1b (strain IP 31758).